A 407-amino-acid chain; its full sequence is Elongation factor Tu (407 aa).

Positions 10 to 217 (KPHVNVGTIG…TLDTYIPDPE (208 aa)) constitute a tr-type G domain. The interval 19-26 (GHVDHGKT) is G1. 19 to 26 (GHVDHGKT) provides a ligand contact to GTP. Position 26 (T26) interacts with Mg(2+). Residues 60–64 (GITIS) are G2. A G3 region spans residues 81–84 (DCPG). Residues 81–85 (DCPGH) and 136–139 (NKSD) each bind GTP. The tract at residues 136-139 (NKSD) is G4. Positions 184–186 (SAL) are G5.

Belongs to the TRAFAC class translation factor GTPase superfamily. Classic translation factor GTPase family. EF-Tu/EF-1A subfamily. Monomer.

It is found in the cytoplasm. The enzyme catalyses GTP + H2O = GDP + phosphate + H(+). GTP hydrolase that promotes the GTP-dependent binding of aminoacyl-tRNA to the A-site of ribosomes during protein biosynthesis. In Marinomonas sp. (strain MWYL1), this protein is Elongation factor Tu.